Consider the following 278-residue polypeptide: Polyamine aminopropyltransferase (278 aa).

A PABS domain is found at glutamate 5–lysine 238. Glutamine 34 contributes to the S-methyl-5'-thioadenosine binding site. The spermidine site is built by histidine 65 and aspartate 89. S-methyl-5'-thioadenosine contacts are provided by residues glutamate 109 and aspartate 140 to glycine 141. Aspartate 158 functions as the Proton acceptor in the catalytic mechanism. Residue aspartate 158–aspartate 161 coordinates spermidine. Position 165 (proline 165) interacts with S-methyl-5'-thioadenosine.

Belongs to the spermidine/spermine synthase family. Homodimer or homotetramer.

The protein localises to the cytoplasm. It carries out the reaction S-adenosyl 3-(methylsulfanyl)propylamine + putrescine = S-methyl-5'-thioadenosine + spermidine + H(+). The protein operates within amine and polyamine biosynthesis; spermidine biosynthesis; spermidine from putrescine: step 1/1. Its function is as follows. Catalyzes the irreversible transfer of a propylamine group from the amino donor S-adenosylmethioninamine (decarboxy-AdoMet) to putrescine (1,4-diaminobutane) to yield spermidine. In Caldicellulosiruptor bescii (strain ATCC BAA-1888 / DSM 6725 / KCTC 15123 / Z-1320) (Anaerocellum thermophilum), this protein is Polyamine aminopropyltransferase.